A 142-amino-acid polypeptide reads, in one-letter code: Large ribosomal subunit protein uL13 (142 aa).

This sequence belongs to the universal ribosomal protein uL13 family. As to quaternary structure, part of the 50S ribosomal subunit.

This protein is one of the early assembly proteins of the 50S ribosomal subunit, although it is not seen to bind rRNA by itself. It is important during the early stages of 50S assembly. The protein is Large ribosomal subunit protein uL13 of Pectobacterium atrosepticum (strain SCRI 1043 / ATCC BAA-672) (Erwinia carotovora subsp. atroseptica).